The following is a 159-amino-acid chain: Phosphopantetheine adenylyltransferase (159 aa).

Thr10 lines the substrate pocket. ATP contacts are provided by residues 10–11 (TF) and His18. The substrate site is built by Lys42, Met74, and Arg88. Residues 89–91 (GLR), Glu99, and 124–130 (WSFISSS) contribute to the ATP site.

This sequence belongs to the bacterial CoaD family. Homohexamer. It depends on Mg(2+) as a cofactor.

Its subcellular location is the cytoplasm. The enzyme catalyses (R)-4'-phosphopantetheine + ATP + H(+) = 3'-dephospho-CoA + diphosphate. Its pathway is cofactor biosynthesis; coenzyme A biosynthesis; CoA from (R)-pantothenate: step 4/5. In terms of biological role, reversibly transfers an adenylyl group from ATP to 4'-phosphopantetheine, yielding dephospho-CoA (dPCoA) and pyrophosphate. This is Phosphopantetheine adenylyltransferase from Salmonella agona (strain SL483).